The following is a 214-amino-acid chain: MSSAGLNVGKKNAYTAVKVDPDGDYCTPGAFELERLFWKGCPKYTHVNEVWPNLYIGDEKTALDRYSLEKAGFTHILNAAHGQRNVDTGPEYYQDMTVEYHGVEADDLPTFKLSQFFYSASEFIDNALQDERNKVLVHCAMGRSRSATLVLAYLMIYKNMTVVDAIEQVSRHRCILPNRGFLKQLRELDIELALQRRNTKNSLPSNDDENSTTI.

The region spanning 46–194 is the Tyrosine-protein phosphatase domain; sequence HVNEVWPNLY…LRELDIELAL (149 aa). 138–145 contributes to the substrate binding site; that stretch reads HCAMGRSR. The Phosphocysteine intermediate role is filled by Cys139.

This sequence belongs to the protein-tyrosine phosphatase family. Non-receptor class dual specificity subfamily.

It is found in the cytoplasm. The protein localises to the nucleus. It carries out the reaction O-phospho-L-tyrosyl-[protein] + H2O = L-tyrosyl-[protein] + phosphate. The enzyme catalyses O-phospho-L-seryl-[protein] + H2O = L-seryl-[protein] + phosphate. It catalyses the reaction O-phospho-L-threonyl-[protein] + H2O = L-threonyl-[protein] + phosphate. Functionally, dual specificity phosphatase able to dephosphorylate phosphotyrosine, phosphoserine and phosphothreonine residues within the same substrate, with a preference for phosphotyrosine as a substrate. Involved in the modulation of AMPK and MAPK1/2 signaling pathways. The protein is Dual specificity phosphatase 29 (DUSP29) of Gallus gallus (Chicken).